We begin with the raw amino-acid sequence, 185 residues long: Probable nicotinate-nucleotide adenylyltransferase (185 aa).

The protein belongs to the NadD family.

It carries out the reaction nicotinate beta-D-ribonucleotide + ATP + H(+) = deamido-NAD(+) + diphosphate. It functions in the pathway cofactor biosynthesis; NAD(+) biosynthesis; deamido-NAD(+) from nicotinate D-ribonucleotide: step 1/1. Functionally, catalyzes the reversible adenylation of nicotinate mononucleotide (NaMN) to nicotinic acid adenine dinucleotide (NaAD). The chain is Probable nicotinate-nucleotide adenylyltransferase from Methylorubrum extorquens (strain PA1) (Methylobacterium extorquens).